The primary structure comprises 427 residues: 3-deoxy-D-manno-octulosonic acid transferase (427 aa).

A helical; Signal-anchor membrane pass occupies residues 4–24 (FFYTSLLLICQPLILCFIGLL). Glutamate 62 (proton acceptor) is an active-site residue. CMP is bound by residues 270-271 (PR), 311-313 (MGE), and 337-340 (NPLE).

It belongs to the glycosyltransferase group 1 family. Glycosyltransferase 30 subfamily.

It localises to the cell inner membrane. The catalysed reaction is lipid IVA (E. coli) + CMP-3-deoxy-beta-D-manno-octulosonate = alpha-Kdo-(2-&gt;6)-lipid IVA (E. coli) + CMP + H(+). The protein operates within bacterial outer membrane biogenesis; LPS core biosynthesis. Involved in lipopolysaccharide (LPS) biosynthesis. Catalyzes the transfer of a single 3-deoxy-D-manno-octulosonate (Kdo) residue from CMP-Kdo to lipid IV(A), the tetraacyldisaccharide-1,4'-bisphosphate precursor of lipid A. Is strictly monofunctional, i.e. is capable of adding only a single Kdo residue to the acceptor lipid. In Haemophilus influenzae (strain ATCC 51907 / DSM 11121 / KW20 / Rd), this protein is 3-deoxy-D-manno-octulosonic acid transferase (waaA).